Reading from the N-terminus, the 459-residue chain is Cysteine--tRNA ligase (459 aa).

Cys28 lines the Zn(2+) pocket. The short motif at 30–40 (ITVYDLCHVGH) is the 'HIGH' region element. Zn(2+)-binding residues include Cys209, His234, and Glu238. The 'KMSKS' region signature appears at 266–270 (KMSKS). Lys269 lines the ATP pocket.

It belongs to the class-I aminoacyl-tRNA synthetase family. As to quaternary structure, monomer. Zn(2+) serves as cofactor.

It localises to the cytoplasm. It carries out the reaction tRNA(Cys) + L-cysteine + ATP = L-cysteinyl-tRNA(Cys) + AMP + diphosphate. The chain is Cysteine--tRNA ligase (cysS) from Pasteurella multocida (strain Pm70).